The primary structure comprises 199 residues: Fe/S biogenesis protein NfuA (199 aa).

The [4Fe-4S] cluster site is built by cysteine 151 and cysteine 154.

Belongs to the NfuA family. In terms of assembly, homodimer. [4Fe-4S] cluster serves as cofactor.

In terms of biological role, involved in iron-sulfur cluster biogenesis. Binds a 4Fe-4S cluster, can transfer this cluster to apoproteins, and thereby intervenes in the maturation of Fe/S proteins. Could also act as a scaffold/chaperone for damaged Fe/S proteins. In Xylella fastidiosa (strain M12), this protein is Fe/S biogenesis protein NfuA.